Consider the following 255-residue polypeptide: 3-oxo-5-alpha-steroid 4-dehydrogenase 1 (255 aa).

5 consecutive transmembrane segments (helical) span residues Leu-6–Gly-26, Val-82–Ile-102, Pro-107–Gln-127, Val-142–Ile-162, and Phe-205–Leu-225.

It belongs to the steroid 5-alpha reductase family.

Its subcellular location is the microsome membrane. The protein resides in the endoplasmic reticulum membrane. The enzyme catalyses a 3-oxo-5alpha-steroid + NADP(+) = a 3-oxo-Delta(4)-steroid + NADPH + H(+). It catalyses the reaction 5alpha-pregnane-3,20-dione + NADP(+) = progesterone + NADPH + H(+). The catalysed reaction is 17beta-hydroxy-5alpha-androstan-3-one + NADP(+) = testosterone + NADPH + H(+). It carries out the reaction androst-4-ene-3,17-dione + NADPH + H(+) = 5alpha-androstan-3,17-dione + NADP(+). Converts testosterone into 5-alpha-dihydrotestosterone and progesterone or corticosterone into their corresponding 5-alpha-3-oxosteroids. It plays a central role in sexual differentiation and androgen physiology. The chain is 3-oxo-5-alpha-steroid 4-dehydrogenase 1 from Mus musculus (Mouse).